A 510-amino-acid chain; its full sequence is Polyamine aminopropyltransferase 2 (510 aa).

A run of 6 helical transmembrane segments spans residues 6–26, 38–58, 74–94, 102–122, 140–160, and 165–185; these read ALLV…ELIA, ILQF…GSWV, LELL…LLFA, LVLY…IPLV, VLTF…LVLA, and LVRT…WTLW. The 245-residue stretch at 205-449 folds into the PABS domain; that stretch reads AGMVGAALLA…GEWGFILAAP (245 aa). Positions 207–456 are spermidine synthase; it reads MVGAALLAGF…AAPGRADFRP (250 aa). Position 244 (glutamine 244) interacts with S-methyl-5'-thioadenosine. Histidine 274 and aspartate 298 together coordinate spermidine. Residues aspartate 318 and 352-353 contribute to the S-methyl-5'-thioadenosine site; that span reads DA. Aspartate 370 acts as the Proton acceptor in catalysis.

Belongs to the spermidine/spermine synthase family. Homodimer or homotetramer.

The protein resides in the cell membrane. It carries out the reaction S-adenosyl 3-(methylsulfanyl)propylamine + putrescine = S-methyl-5'-thioadenosine + spermidine + H(+). It participates in amine and polyamine biosynthesis; spermidine biosynthesis; spermidine from putrescine: step 1/1. Functionally, catalyzes the irreversible transfer of a propylamine group from the amino donor S-adenosylmethioninamine (decarboxy-AdoMet) to putrescine (1,4-diaminobutane) to yield spermidine. This Ralstonia nicotianae (strain ATCC BAA-1114 / GMI1000) (Ralstonia solanacearum) protein is Polyamine aminopropyltransferase 2.